A 200-amino-acid polypeptide reads, in one-letter code: Oligoribonuclease (200 aa).

Residues 5-169 enclose the Exonuclease domain; that stretch reads MVWIDCEMTG…ADIRESIAEL (165 aa). Residue Y126 is part of the active site.

Belongs to the oligoribonuclease family.

It localises to the cytoplasm. Functionally, 3'-to-5' exoribonuclease specific for small oligoribonucleotides. This Streptomyces avermitilis (strain ATCC 31267 / DSM 46492 / JCM 5070 / NBRC 14893 / NCIMB 12804 / NRRL 8165 / MA-4680) protein is Oligoribonuclease.